The chain runs to 213 residues: Holliday junction resolvase RecU (213 aa).

Mg(2+)-binding residues include Thr99, Asp101, Glu114, and Gln133.

The protein belongs to the RecU family. It depends on Mg(2+) as a cofactor.

It localises to the cytoplasm. It catalyses the reaction Endonucleolytic cleavage at a junction such as a reciprocal single-stranded crossover between two homologous DNA duplexes (Holliday junction).. In terms of biological role, endonuclease that resolves Holliday junction intermediates in genetic recombination. Cleaves mobile four-strand junctions by introducing symmetrical nicks in paired strands. Promotes annealing of linear ssDNA with homologous dsDNA. Required for DNA repair, homologous recombination and chromosome segregation. The protein is Holliday junction resolvase RecU of Lactococcus lactis subsp. cremoris (strain MG1363).